Reading from the N-terminus, the 268-residue chain is tRNA pseudouridine synthase A (268 aa).

Asp52 acts as the Nucleophile in catalysis. Tyr110 lines the substrate pocket.

It belongs to the tRNA pseudouridine synthase TruA family. In terms of assembly, homodimer.

It carries out the reaction uridine(38/39/40) in tRNA = pseudouridine(38/39/40) in tRNA. In terms of biological role, formation of pseudouridine at positions 38, 39 and 40 in the anticodon stem and loop of transfer RNAs. This chain is tRNA pseudouridine synthase A, found in Prochlorococcus marinus (strain MIT 9215).